Consider the following 258-residue polypeptide: (S)-hydroxynitrile lyase (258 aa).

Residues 5 to 242 (HFVLIHTICH…GGDHKLQLTK (238 aa)) enclose the AB hydrolase-1 domain. Thr11 and Ser80 together coordinate 2-hydroxy-2-methylpropanenitrile. Acetone-binding residues include Thr11, Ser80, and Cys81. The Proton donor/acceptor role is filled by Ser80. His236 acts as the Proton donor/acceptor in catalysis.

It belongs to the AB hydrolase superfamily. Hydroxynitrile lyase family. In terms of assembly, homotetramer.

It catalyses the reaction a monosubstituted aliphatic (S)-hydroxynitrile = an aldehyde + hydrogen cyanide. It carries out the reaction a disubstituted aliphatic (S)-hydroxynitrile = a ketone + hydrogen cyanide. The enzyme catalyses an aromatic (S)-hydroxynitrile = an aromatic aldehyde + hydrogen cyanide. The catalysed reaction is 2-hydroxy-2-methylpropanenitrile = acetone + hydrogen cyanide. It catalyses the reaction butan-2-one + hydrogen cyanide = 2-hydroxy-2-methylbutanenitrile. It carries out the reaction pentan-2-one + hydrogen cyanide = (2S)-2-hydroxy-2-methylpentanenitrile. The enzyme catalyses hexan-2-one + hydrogen cyanide = (2S)-2-hydroxy-2-methylhexanenitrile. The catalysed reaction is heptan-2-one + hydrogen cyanide = (2S)-2-hydroxy-2-methylheptanenitrile. It catalyses the reaction 4-methylpentan-2-one + hydrogen cyanide = (2S)-2-hydroxy-2,4-dimethylpentanenitrile. It carries out the reaction 3,3-dimethylbutan-2-one + hydrogen cyanide = (2S)-2-hydroxy-2-methyl-3,3-dimethylbutanenitrile. The enzyme catalyses acetophenone + hydrogen cyanide = (2S)-2-hydroxy-2-phenylpropanenitrile. The catalysed reaction is propanal + hydrogen cyanide = (2S)-2-hydroxybutanenitrile. It catalyses the reaction pentanal + hydrogen cyanide = (2S)-2-hydroxyhexanenitrile. It carries out the reaction 2-methylpropanal + hydrogen cyanide = (2S)-2-hydroxy-3-methylbutanenitrile. The enzyme catalyses 2,2-dimethylpropanal + hydrogen cyanide = (2S)-2-hydroxy-3,3-dimethylbutanenitrile. The catalysed reaction is acrolein + hydrogen cyanide = (2S)-2-hydroxybut-3-enenitrile. It catalyses the reaction (2E)-but-2-enal + hydrogen cyanide = (2S,3E)-2-hydroxypent-3-enenitrile. It carries out the reaction (E)-hex-2-enal + hydrogen cyanide = (2S,3E)-2-hydroxyhept-3-enenitrile. The enzyme catalyses cyclohexanecarbaldehyde + hydrogen cyanide = (2S)-2-cyclohexyl-2-hydroxyacetonitrile. The catalysed reaction is benzaldehyde + hydrogen cyanide = (S)-mandelonitrile. It catalyses the reaction 4-methoxybenzaldehyde + hydrogen cyanide = (2S)-2-hydroxy-2-(4-methoxyphenyl)acetonitrile. It carries out the reaction piperonal + hydrogen cyanide = (2S)-2-(2H-1,3-benzodioxol-5-yl)-2-hydroxyacetonitrile. The enzyme catalyses formylthiophene + hydrogen cyanide = (2R)-2-hydroxy-2-(thiophen-2-yl)acetonitrile. The catalysed reaction is 3-formylthiophene + hydrogen cyanide = (2S)-2-hydroxy-2-(thiophen-3-yl)acetonitrile. It catalyses the reaction furan-3-carbaldehyde + hydrogen cyanide = (2S)-2-(furan-3-yl)-2-hydroxyacetonitrile. Its function is as follows. Involved in cyanogenesis, the release of HCN from cyanogenic glycosides in injured tissues; the release of toxic HCN is believed to play a central role in the defense mechanism of plants against herbivores and microbial attack. Decomposes a variety of cyanohydrins (alpha-hydroxynitriles) into HCN and the corresponding aldehydes or ketones; two natural substrates are 2-hydroxy-2-methylpropanenitrile (acetone cyanohydrin) and 2-hydroxy-2-methylbutanenitrile (2-butanone cyanohydrin), but in vitro can also act on 2-hydroxy-2-methylpentanenitrile (2-pentanone cyanohydrin) and mandelonitrile. Is also able to catalyze the reverse reaction in vitro, leading to the stereospecific synthesis of aliphatic, aromatic, and heterocyclic cyanohydrins, important intermediates in the production of various agrochemicals or pharmaceuticals. The sequence is that of (S)-hydroxynitrile lyase from Manihot esculenta (Cassava).